The sequence spans 59 residues: Large ribosomal subunit protein uL30 (59 aa).

Belongs to the universal ribosomal protein uL30 family. Part of the 50S ribosomal subunit.

This Listeria welshimeri serovar 6b (strain ATCC 35897 / DSM 20650 / CCUG 15529 / CIP 8149 / NCTC 11857 / SLCC 5334 / V8) protein is Large ribosomal subunit protein uL30.